A 368-amino-acid chain; its full sequence is DNA replication and repair protein RecF (368 aa).

30 to 37 (GRNGSGKT) serves as a coordination point for ATP.

The protein belongs to the RecF family.

It localises to the cytoplasm. Functionally, the RecF protein is involved in DNA metabolism; it is required for DNA replication and normal SOS inducibility. RecF binds preferentially to single-stranded, linear DNA. It also seems to bind ATP. In Chlorobaculum tepidum (strain ATCC 49652 / DSM 12025 / NBRC 103806 / TLS) (Chlorobium tepidum), this protein is DNA replication and repair protein RecF.